The chain runs to 98 residues: NADH-ubiquinone oxidoreductase chain 4L (98 aa).

The next 3 membrane-spanning stretches (helical) occupy residues 1–21 (MVLI…GVLI), 36–56 (MMLS…MFSI), and 61–81 (LILL…LVSI).

This sequence belongs to the complex I subunit 4L family.

The protein localises to the mitochondrion membrane. The catalysed reaction is a ubiquinone + NADH + 5 H(+)(in) = a ubiquinol + NAD(+) + 4 H(+)(out). Functionally, core subunit of the mitochondrial membrane respiratory chain NADH dehydrogenase (Complex I) which catalyzes electron transfer from NADH through the respiratory chain, using ubiquinone as an electron acceptor. Part of the enzyme membrane arm which is embedded in the lipid bilayer and involved in proton translocation. The chain is NADH-ubiquinone oxidoreductase chain 4L (MT-ND4L) from Didelphis virginiana (North American opossum).